A 1384-amino-acid chain; its full sequence is Protein Gawky (1384 aa).

Disordered stretches follow at residues 1 to 99 (MREA…VWTG), 148 to 227 (NGSS…DPRG), 263 to 335 (TAST…DDGT), and 447 to 501 (VGAP…SGWS). The tract at residues 1 to 205 (MREALFSQDG…HRGGNGSGAT (205 aa)) is required for interaction with AGO1. 2 sufficient for miRNA-mediated silencing regions span residues 1–605 (MREA…SLGS) and 605–830 (SYAD…SVHL). A compositionally biased stretch (polar residues) spans 15–24 (HVNQDTNWEV). The span at 150–171 (SSNITGSSGVATGSSGNSSNAG) shows a compositional bias: low complexity. The interval 205 to 490 (TSSDPRDIRM…GVSWGNKQSK (286 aa)) is minimal N-terminal region required for miRNA-mediated silencing. A compositionally biased stretch (basic and acidic residues) spans 208-225 (DPRDIRMIDPRDPIRGDP). Polar residues-rich tracts occupy residues 449–475 (APSSGSVSSNNWVDDKSNSTLAQNSWS) and 485–501 (GNKQSKPPSNSASSGWS). One can recognise a UBA domain in the interval 547-588 (IIKQSKQYRILVENGFKKEDVERALVIANMNIEEAADMLRAN). Disordered stretches follow at residues 607 to 626 (ADHNSSTSSGGFAGRYPVNS), 809 to 841 (QNMQPTSQQQQPQQQQLPSVHLSNSGNDYLRGH), 889 to 942 (TEFS…NKDW), 962 to 1022 (EPGK…LSSS), 1052 to 1102 (TSPL…GVQT), 1188 to 1221 (SENEVQSIMQHLPQTPSSTSSSGTSGGNVGGVGT), and 1318 to 1368 (GTAN…PSGR). Over residues 809-826 (QNMQPTSQQQQPQQQQLP) the composition is skewed to low complexity. The not required for interaction with AGO1 or miRNAs or for localization to P-bodies but necessary for miRNA-mediated silencing and for interaction with pAbp stretch occupies residues 862–1115 (YQGASNQQSR…NWTGGNTTWG (254 aa)). Positions 898-924 (TKQNLTANTSNINSLGLQNDSTWSTGR) are enriched in polar residues. The segment at 940–1215 (KDWSVAQPTS…TSSSGTSGGN (276 aa)) is sufficient for miRNA-mediated silencing. Residues 1010-1022 (SPTDLPPLSLSSS) are compositionally biased toward low complexity. Positions 1052–1061 (TSPLNKSSSR) are enriched in polar residues. Residues 1068–1084 (TANSNKSANSNASTPTT) show a composition bias toward low complexity. An RRM domain is found at 1117-1189 (SWLLLKNLTA…TTIFAESPSE (73 aa)). Over residues 1188-1203 (SENEVQSIMQHLPQTP) the composition is skewed to polar residues. The tract at residues 1200-1384 (PQTPSSTSSS…ISLVYSIVDD (185 aa)) is not required for interaction with AGO1 or miRNAs or for localization to P-bodies but necessary for miRNA-mediated silencing, dissociation from AGO1 and miRNAs and interaction with pAbp. Residues 1211-1220 (TSGGNVGGVG) are compositionally biased toward gly residues. The span at 1318–1349 (GTANSSGSKSSANNLASGQSSASNLTNSTNST) shows a compositional bias: low complexity. Over residues 1350–1365 (WRQTSQNQALQSQSRP) the composition is skewed to polar residues.

It belongs to the GW182 family. As to quaternary structure, component of the miRNA-directed RNA-induced silencing complex (miRISC), composed of at least AGO1 and gw, which bind mature miRNAs and targets the selective destruction of homologous RNAs. Interacts (via N-terminal region) with AGO1 (via Piwi domain); the interaction is essential for localization of AGO1 in P-bodies and for miRNA-mediated silencing. Interacts with pAbp/PABPC1; this interaction interferes with the binding of pAbp to eIF4G and is required for miRNA-mediated silencing. Interacts with CCR4-NOT complex members Not1, Rga/NOT2, twin/CCR4, Pop2 and NOT3/5 and with PAN complex members CG8232/PAN2 and CG11486/PAN3.

Its subcellular location is the cytoplasm. It localises to the P-body. In terms of biological role, required for gene silencing mediated by micro-RNAs (miRNAs). Silences both polyadenylated and deadenylated mRNAs. Required for miRNA-mediated translational repression and mRNA decay. Not required for miRNA target recognition. Necessary to initiate but not to maintain silencing. Promotes mRNA deadenylation through the recruitment of the CCR4-NOT and PAN complexes and promotes decapping by the DCP1-DCP2 complex. Dissociates from silenced mRNAs after deadenylation. Required for completion of nuclear divisions during early embryonic development. In Drosophila melanogaster (Fruit fly), this protein is Protein Gawky.